A 139-amino-acid polypeptide reads, in one-letter code: MVQREKARDNFEGGCLAELIGSPRDWKCFLAVPDPLLGVQHWLHLWRPQTKDGNSLHRHGDQAWGKHRRQNSLKSPALSGHSIDYHFYPRLRCGMLIGPDKQAVASGLEVLVTSSTKILGQLFPDAAHFLEEASEFKAE.

A disordered region spans residues asparagine 54–serine 75.

This is an uncharacterized protein from Homo sapiens (Human).